The sequence spans 868 residues: DNA mismatch repair protein MutS (868 aa).

620–627 (GPNMGGKS) contributes to the ATP binding site.

Belongs to the DNA mismatch repair MutS family.

Its function is as follows. This protein is involved in the repair of mismatches in DNA. It is possible that it carries out the mismatch recognition step. This protein has a weak ATPase activity. The chain is DNA mismatch repair protein MutS from Xylella fastidiosa (strain Temecula1 / ATCC 700964).